A 259-amino-acid chain; its full sequence is L-erythrulose-1-phosphate isomerase (259 aa).

Histidine 102 (electrophile) is an active-site residue. Glutamate 174 acts as the Proton acceptor in catalysis.

It belongs to the triosephosphate isomerase family.

The catalysed reaction is L-erythrulose 1-phosphate = D-erythrulose 4-phosphate. The protein operates within carbohydrate metabolism. In terms of biological role, involved in catabolism of D-apiose. Catalyzes the isomerization of L-erythrulose 1-phosphate to D-erythrulose 4-phosphate. The protein is L-erythrulose-1-phosphate isomerase of Pectobacterium atrosepticum (strain SCRI 1043 / ATCC BAA-672) (Erwinia carotovora subsp. atroseptica).